A 436-amino-acid polypeptide reads, in one-letter code: MQVSVENTTALERRLSITVPAERIETAVNKRLQQTAQKAKIAGFRPGKVPMSEIKRRFGADARQEAVGDVIQASFYEAVVEQKLNPAGSPSIEPKSLEAGKDLEYVAVFEVFPEFEVAGFDGIAIERLSAEVADSDLDNMLEILRKQNTRFEVAERAAQNEDQLNIDFVGKVDGEAFAGGSAKGTQLVLGSNRMIPGFEDGLVGAKAGEERVLNLEFPADYQNLDLAGKAAEFTVTVNSVSEPKLPELNEEFFAQFGIKETGIEGFRTEVRKNMERELRQAIKSKVKNQVMDGLLAANPIEVPKALLSNEVDRLRVQAVQQFGGNIKPDQLPAELFEEQAKRRVVLGLIVAEVVKQFDLKPDEDRVREMIQEMASAYQEPEQVVAWYYKNDQQLNEVRSVVLEEQVVDTVLQKAKVTDKAVSYEEAVKPAEAAQAD.

Residues 161–246 enclose the PPIase FKBP-type domain; sequence EDQLNIDFVG…VNSVSEPKLP (86 aa).

The protein belongs to the FKBP-type PPIase family. Tig subfamily.

It localises to the cytoplasm. The enzyme catalyses [protein]-peptidylproline (omega=180) = [protein]-peptidylproline (omega=0). Functionally, involved in protein export. Acts as a chaperone by maintaining the newly synthesized protein in an open conformation. Functions as a peptidyl-prolyl cis-trans isomerase. This is Trigger factor from Pseudomonas fluorescens (strain SBW25).